The sequence spans 110 residues: MKFVLLFGVLLVTLFSYSSAEMLDDFDQADEDELLSLIEKEEARKDCIPKHHECTSNKHGCCRGHLFKYECQCTTVVTQSREETERCFCGTPPHHKAAELVVGFGKKIFG.

The signal sequence occupies residues 1 to 20; it reads MKFVLLFGVLLVTLFSYSSA. Positions 21–44 are excised as a propeptide; that stretch reads EMLDDFDQADEDELLSLIEKEEAR. Cystine bridges form between Cys47-Cys62, Cys54-Cys71, Cys61-Cys89, and Cys73-Cys87.

Belongs to the neurotoxin 19 (CSTX) family. 03 subfamily. As to expression, expressed by the venom gland.

The protein localises to the secreted. This is U1-lycotoxin-Ls1cc from Lycosa singoriensis (Wolf spider).